The primary structure comprises 1015 residues: DExH-box ATP-dependent RNA helicase DExH8 (1015 aa).

The 162-residue stretch at 36 to 197 (IDKILENRVT…FKELGRGERV (162 aa)) folds into the Helicase ATP-binding domain. 49-56 (GEPGCGKS) contributes to the ATP binding site. Positions 144 to 147 (DEVH) match the DEVH box motif. The Helicase C-terminal domain occupies 254–419 (LIHDLILYIH…KLSLRQQVLH (166 aa)). C3H1-type zinc fingers lie at residues 727–753 (YGEAPVCVYFLNGYCNRGGQCTFTHTL) and 754–782 (QSTRPACKFFASSQGCRNGESCLFSHAMR).

This sequence belongs to the DExH box helicase family.

The catalysed reaction is ATP + H2O = ADP + phosphate + H(+). This is DExH-box ATP-dependent RNA helicase DExH8 from Arabidopsis thaliana (Mouse-ear cress).